We begin with the raw amino-acid sequence, 253 residues long: 5'-nucleotidase SurE (253 aa).

The a divalent metal cation site is built by Asp8, Asp9, Ser39, and Asn95.

Belongs to the SurE nucleotidase family. A divalent metal cation is required as a cofactor.

It localises to the cytoplasm. It carries out the reaction a ribonucleoside 5'-phosphate + H2O = a ribonucleoside + phosphate. Functionally, nucleotidase that shows phosphatase activity on nucleoside 5'-monophosphates. This is 5'-nucleotidase SurE from Kosmotoga olearia (strain ATCC BAA-1733 / DSM 21960 / TBF 19.5.1).